The sequence spans 343 residues: Protein RecA (343 aa).

Residue 66–73 (GPESSGKT) participates in ATP binding.

It belongs to the RecA family.

The protein localises to the cytoplasm. Its function is as follows. Can catalyze the hydrolysis of ATP in the presence of single-stranded DNA, the ATP-dependent uptake of single-stranded DNA by duplex DNA, and the ATP-dependent hybridization of homologous single-stranded DNAs. It interacts with LexA causing its activation and leading to its autocatalytic cleavage. The polypeptide is Protein RecA (Dechloromonas aromatica (strain RCB)).